A 400-amino-acid polypeptide reads, in one-letter code: Argininosuccinate synthase (400 aa).

ATP-binding positions include 11-19 (AYSGGLDTS) and Ala-38. 2 residues coordinate L-citrulline: Tyr-89 and Ser-94. Position 119 (Gly-119) interacts with ATP. 3 residues coordinate L-aspartate: Thr-121, Asn-125, and Asp-126. Position 125 (Asn-125) interacts with L-citrulline. Positions 129, 178, 187, 263, and 275 each coordinate L-citrulline.

It belongs to the argininosuccinate synthase family. Type 1 subfamily. Homotetramer.

It localises to the cytoplasm. The catalysed reaction is L-citrulline + L-aspartate + ATP = 2-(N(omega)-L-arginino)succinate + AMP + diphosphate + H(+). It participates in amino-acid biosynthesis; L-arginine biosynthesis; L-arginine from L-ornithine and carbamoyl phosphate: step 2/3. In Desulfatibacillum aliphaticivorans, this protein is Argininosuccinate synthase.